Here is a 290-residue protein sequence, read N- to C-terminus: MLVLKCSTKLFILENMLKSHFPESLKVYGAVMNINRGNPFQKEVVLDSWPNFKVIITRREREAETDNLDHYTNAYAVFYKDIRAYQQLLEEHDVINWDQVFQIQGLQSELYAASKAVAKARLLDLDINLASFKAVHFSPVSSVPDHSFLTGPTPRLTYLSVSDADLLNRTWSRGGNQQCLRYLANLIACFPSVCVRDEKGNPVSWGITDQFATMCHGYTLPDHRRKGYSRLVALTLARKLQSRGFPSQGNVLDDNLASINLLKSVQAEFLPCRFHRLILTPAAFSRQAHL.

It carries out the reaction an acyl-CoA + glycine = an N-acylglycine + CoA + H(+). The catalysed reaction is (9Z)-octadecenoyl-CoA + glycine = N-(9Z-octadecenoyl)glycine + CoA + H(+). The enzyme catalyses hexadecanoyl-CoA + glycine = N-hexadecanoylglycine + CoA + H(+). The protein operates within lipid metabolism. Functionally, catalyzes the conjugation of long-chain fatty acyl-CoA thioester and glycine to produce long-chain N-(fatty acyl)glycine, an intermediate in the primary fatty acid amide biosynthetic pathway. The sequence is that of Glycine-N-acyltransferase-like protein 3 from Mus musculus (Mouse).